We begin with the raw amino-acid sequence, 710 residues long: Ribonuclease R (710 aa).

Residues 246 to 573 enclose the RNB domain; the sequence is RKDLRDKVIV…VHRLLKLYLE (328 aa). An S1 motif domain is found at 625 to 705; sequence GEVFNVVVTN…IRGEIDFVLV (81 aa).

The protein belongs to the RNR ribonuclease family. RNase R subfamily.

Its subcellular location is the cytoplasm. It carries out the reaction Exonucleolytic cleavage in the 3'- to 5'-direction to yield nucleoside 5'-phosphates.. 3'-5' exoribonuclease that releases 5'-nucleoside monophosphates and is involved in maturation of structured RNAs. The chain is Ribonuclease R from Thermotoga maritima (strain ATCC 43589 / DSM 3109 / JCM 10099 / NBRC 100826 / MSB8).